The sequence spans 623 residues: Protein vein (623 aa).

The N-terminal stretch at 1–40 is a signal peptide; it reads MYAQHLRKWSLKTKKQLMPLILLIISYMLLLNTCVLSSSA. Disordered stretches follow at residues 70–98, 130–162, 184–214, and 229–317; these read IPLS…SSNN, DAGS…SMQK, AASS…NYSS, and PESM…QRYN. Composition is skewed to low complexity over residues 72–98 and 136–158; these read LSSD…SSNN and PAQQ…QQQQ. The N-linked (GlcNAc...) asparagine glycan is linked to N76. N211 is a glycosylation site (N-linked (GlcNAc...) asparagine). A compositionally biased stretch (basic and acidic residues) spans 233–248; it reads LEDRSPEQAARSRRDG. N252 carries an N-linked (GlcNAc...) asparagine glycan. Low complexity predominate over residues 255–267; sequence RQQQRTGHRQQLQ. Basic residues predominate over residues 305-316; that stretch reads QRRKHQRKHQRY. Residues N350, N381, N424, N449, N521, and N574 are each glycosylated (N-linked (GlcNAc...) asparagine). The Ig-like C2-type domain maps to 457–542; the sequence is TKIFSKPSKA…AKNKASKAIA (86 aa). 4 disulfide bridges follow: C478-C531, C566-C577, C571-C588, and C590-C599. An EGF-like domain is found at 561–599; the sequence is ASGIPCNFDYCFHNGTCRMIPDINEVYCRCPTEYFGNRC.

The protein localises to the secreted. Its function is as follows. Ligand for the EGF receptor. Seems to play a role in the global proliferation of wing disc cells and the larval patterning. Shows a strong synergistic genetic interaction with spi, suggesting a molecular interdependence. Required for the development of interveins cells. The sequence is that of Protein vein (vn) from Drosophila melanogaster (Fruit fly).